The primary structure comprises 241 residues: DNA repair protein RecO (241 aa).

This sequence belongs to the RecO family.

Functionally, involved in DNA repair and RecF pathway recombination. This Phocaeicola vulgatus (strain ATCC 8482 / DSM 1447 / JCM 5826 / CCUG 4940 / NBRC 14291 / NCTC 11154) (Bacteroides vulgatus) protein is DNA repair protein RecO.